Consider the following 312-residue polypeptide: Glycine--tRNA ligase alpha subunit (312 aa).

This sequence belongs to the class-II aminoacyl-tRNA synthetase family. Tetramer of two alpha and two beta subunits.

It is found in the cytoplasm. The enzyme catalyses tRNA(Gly) + glycine + ATP = glycyl-tRNA(Gly) + AMP + diphosphate. The polypeptide is Glycine--tRNA ligase alpha subunit (Nostoc punctiforme (strain ATCC 29133 / PCC 73102)).